The chain runs to 478 residues: Odorant receptor coreceptor (478 aa).

At 1-43 the chain is on the cytoplasmic side; it reads MNVQPTKYHGLVLDLMPNIRLMQGFGHFLFRYVNGPVLIRKLY. Residues 44 to 64 form a helical membrane-spanning segment; that stretch reads SWWNLIMILLQYFAIMGNLVM. Topologically, residues 65-73 are extracellular; it reads NTGDVNELT. Residues 74-94 form a helical membrane-spanning segment; the sequence is ANTITTLFFTHSVTKFIYVAV. Residues 95 to 133 are Cytoplasmic-facing; the sequence is NSEHFYRTLGIWNQPNSHSLFAESDARYHSIALAKMRKL. The chain crosses the membrane as a helical span at residues 134–154; sequence LVMVMVTTVLSVVAWITITFF. Topologically, residues 155-187 are extracellular; sequence GDSVKNVFDKETNETYTVEIPRLPIKAWYPWDA. The N-linked (GlcNAc...) asparagine glycan is linked to Asn167. A helical transmembrane segment spans residues 188–208; sequence MSGVPYFFSFIYQAYFLLFSM. Over 209–343 the chain is Cytoplasmic; that stretch reads CQANLADVMF…VERHKHVVRL (135 aa). Residues 344 to 364 form a helical membrane-spanning segment; sequence VSAIGETYGAALLLHMLTSTI. Residues 365-382 are Extracellular-facing; it reads KLTLLAYQATKIDALNVY. The helical transmembrane segment at 383 to 403 threads the bilayer; sequence GLTVIGYLVYALAQVFLFCIF. At 404-454 the chain is on the cytoplasmic side; sequence GNRLIEESSSVMEAAYSCHWYDGSEEAKTFVQIVCQQCQKAMTISGAKFFT. Residues 455–475 traverse the membrane as a helical segment; that stretch reads VSLDLFASVLGAVVTYFMVLV. The Extracellular portion of the chain corresponds to 476-478; the sequence is QLK.

It belongs to the insect chemoreceptor superfamily. Heteromeric odorant receptor channel (TC 1.A.69) family. Orco subfamily. Heterodimer with conventional odorant receptors (ORs). Complexes exist early in the endomembrane system in olfactory sensory neurons (OSNs), coupling these complexes to the conserved ciliary trafficking pathway. As to expression, found specifically within most antennal and maxillary palp sensilla, as well as in a subset of proboscis sensilla.

The protein resides in the cell membrane. Functionally, odorant coreceptor which complexes with conventional odorant receptors (ORs) to form odorant-sensing units, providing sensitive and prolonged odorant signaling and calcium permeability. Orco is a universal and integral part of the functional odorant receptor, involved in the dendritic localization of other olfactory receptors. Plays a key role in preferred attraction of females for humans over non-human hosts for blood feeding. Human attraction plays a crucial role in the transmission of dengue and yellow fever by the mosquito. Also required for the response to the insect repellent IR3535; or to N,N-Diethyl-meta-toluamide (DEET), the most widely used insect repellent worldwide. This chain is Odorant receptor coreceptor (SGPRor7), found in Aedes aegypti (Yellowfever mosquito).